Consider the following 51-residue polypeptide: Large ribosomal subunit protein eL39 (51 aa).

This sequence belongs to the eukaryotic ribosomal protein eL39 family.

This chain is Large ribosomal subunit protein eL39, found in Pyrobaculum islandicum (strain DSM 4184 / JCM 9189 / GEO3).